The sequence spans 227 residues: MEIGGLVYLILIITIINLSFGETNNYCKIKCRKGIHTLCKFGTSMKPNCGRNVVKAYGLTNDEKNEILKRHNDFRQNVAKGLETRGKPGPQPPAKNMNVLVWNDELAKIAQTWANQCDFNHDDCRNTAKYQVGQNIAISSTTATQFDRPSKLIKQWEDEVTEFNYKVGLQNSNFRKVGHYTQMVWGKTKEIGCGSIKYIEDNWYTHYLVCNYGPGGNDFNQPIYERK.

An N-terminal signal peptide occupies residues 1–23; that stretch reads MEIGGLVYLILIITIINLSFGET. Cystine bridges form between Cys-27–Cys-39, Cys-31–Cys-124, Cys-49–Cys-117, and Cys-193–Cys-210. Residues 68–212 form the SCP domain; sequence LKRHNDFRQN…WYTHYLVCNY (145 aa).

This sequence belongs to the CRISP family. Venom allergen 5-like subfamily. In terms of tissue distribution, expressed by the venom gland.

It is found in the secreted. In Dolichovespula maculata (Bald-faced hornet), this protein is Venom allergen 5.01.